We begin with the raw amino-acid sequence, 171 residues long: 3-hydroxydecanoyl-[acyl-carrier-protein] dehydratase (171 aa).

His-70 is a catalytic residue.

The protein belongs to the thioester dehydratase family. FabA subfamily. In terms of assembly, homodimer.

The protein resides in the cytoplasm. It catalyses the reaction a (3R)-hydroxyacyl-[ACP] = a (2E)-enoyl-[ACP] + H2O. It carries out the reaction (3R)-hydroxydecanoyl-[ACP] = (2E)-decenoyl-[ACP] + H2O. The enzyme catalyses (2E)-decenoyl-[ACP] = (3Z)-decenoyl-[ACP]. Its pathway is lipid metabolism; fatty acid biosynthesis. Functionally, necessary for the introduction of cis unsaturation into fatty acids. Catalyzes the dehydration of (3R)-3-hydroxydecanoyl-ACP to E-(2)-decenoyl-ACP and then its isomerization to Z-(3)-decenoyl-ACP. Can catalyze the dehydratase reaction for beta-hydroxyacyl-ACPs with saturated chain lengths up to 16:0, being most active on intermediate chain length. The sequence is that of 3-hydroxydecanoyl-[acyl-carrier-protein] dehydratase from Mesorhizobium japonicum (strain LMG 29417 / CECT 9101 / MAFF 303099) (Mesorhizobium loti (strain MAFF 303099)).